A 504-amino-acid chain; its full sequence is Pentatricopeptide repeat-containing protein At1g05600 (504 aa).

PPR repeat units lie at residues 45 to 79 (NGSV…SCEC), 80 to 114 (KDSV…NCVN), 115 to 145 (WSLS…YCYG), 151 to 185 (RITA…GCYP), 186 to 216 (DRDS…MFWR), 225 to 259 (DIVV…GLKA), 260 to 296 (PKRC…GAIP), 297 to 331 (CLDS…GFEP), 332 to 367 (TPFI…HCLP), 368 to 398 (TVGV…MSKQ), 404 to 438 (NEET…SHFP), and 439 to 473 (GVET…DMVP).

It belongs to the PPR family. P subfamily.

The polypeptide is Pentatricopeptide repeat-containing protein At1g05600 (Arabidopsis thaliana (Mouse-ear cress)).